Consider the following 263-residue polypeptide: Protein STK_14130 (263 aa).

It belongs to the CinA family.

The protein is Protein STK_14130 of Sulfurisphaera tokodaii (strain DSM 16993 / JCM 10545 / NBRC 100140 / 7) (Sulfolobus tokodaii).